Here is a 533-residue protein sequence, read N- to C-terminus: L-aspartate oxidase 1 (533 aa).

Residues 10 to 13 (SGLA), Lys32, 39 to 46 (ASDWAQGG), and Asp214 contribute to the FAD site. Arg281 functions as the Proton donor/acceptor in the catalytic mechanism. FAD-binding positions include Glu366 and 382–383 (SL).

Belongs to the FAD-dependent oxidoreductase 2 family. NadB subfamily. FAD serves as cofactor.

It localises to the cytoplasm. The catalysed reaction is L-aspartate + O2 = iminosuccinate + H2O2. It functions in the pathway cofactor biosynthesis; NAD(+) biosynthesis; iminoaspartate from L-aspartate (oxidase route): step 1/1. Catalyzes the oxidation of L-aspartate to iminoaspartate, the first step in the de novo biosynthesis of NAD(+). This chain is L-aspartate oxidase 1 (nadB1), found in Ralstonia nicotianae (strain ATCC BAA-1114 / GMI1000) (Ralstonia solanacearum).